A 105-amino-acid polypeptide reads, in one-letter code: Replication restart protein PriB (105 aa).

The region spanning 1-102 (MTANRLVLTG…LHAEQIELID (102 aa)) is the SSB domain.

This sequence belongs to the PriB family. In terms of assembly, homodimer. Interacts with PriA and DnaT. Component of the replication restart primosome. Primosome assembly occurs via a 'hand-off' mechanism. PriA binds to replication forks, subsequently PriB then DnaT bind; DnaT then displaces ssDNA to generate the helicase loading substrate.

Involved in the restart of stalled replication forks, which reloads the replicative helicase on sites other than the origin of replication; the PriA-PriB pathway is the major replication restart pathway. During primosome assembly it facilitates complex formation between PriA and DnaT on DNA; stabilizes PriA on DNA. Stimulates the DNA unwinding activity of PriA helicase. This Proteus mirabilis (strain HI4320) protein is Replication restart protein PriB.